Here is a 469-residue protein sequence, read N- to C-terminus: 3-isopropylmalate dehydratase large subunit (469 aa).

Cys347, Cys408, and Cys411 together coordinate [4Fe-4S] cluster.

This sequence belongs to the aconitase/IPM isomerase family. LeuC type 1 subfamily. Heterodimer of LeuC and LeuD. It depends on [4Fe-4S] cluster as a cofactor.

It catalyses the reaction (2R,3S)-3-isopropylmalate = (2S)-2-isopropylmalate. Its pathway is amino-acid biosynthesis; L-leucine biosynthesis; L-leucine from 3-methyl-2-oxobutanoate: step 2/4. Functionally, catalyzes the isomerization between 2-isopropylmalate and 3-isopropylmalate, via the formation of 2-isopropylmaleate. The chain is 3-isopropylmalate dehydratase large subunit from Actinobacillus succinogenes (strain ATCC 55618 / DSM 22257 / CCUG 43843 / 130Z).